The following is a 362-amino-acid chain: MNKVLIAAAGTGGHIFPALAVAEQMRDNGWQVDWLGTQEGRLESRVIPAANFPLHSISMTGVRGHGLKRKLFMPFTLAKAVLQCRRLLKTLQPQVVATFGGYVCAPMGLAAKLLGIPLVVHEQNAIPGMTTRLLAPRANKVMLGLPVALPQWQQYPVVGNPLRKGLLAQAAEQTEKSNTDGALNILVVGGSLGAQVLNEAVPEAVKALEGVELNVLHQCGAEREATTEKAYLGASVLKTLKVTEFIEDMGDAFKNADLVICRAGALTISELAVMGVASILVPLPHAVDDHQSANAKVLESRGAAVLLPQTEVVEGALKQQLKRLLHDRQQLWTMARFARQCAMPEATQRLVNECMEYRQSDD.

Residues 11–13, Asn124, Arg163, Ser191, Ile246, and Gln291 each bind UDP-N-acetyl-alpha-D-glucosamine; that span reads TGG.

This sequence belongs to the glycosyltransferase 28 family. MurG subfamily.

The protein resides in the cell inner membrane. The catalysed reaction is di-trans,octa-cis-undecaprenyl diphospho-N-acetyl-alpha-D-muramoyl-L-alanyl-D-glutamyl-meso-2,6-diaminopimeloyl-D-alanyl-D-alanine + UDP-N-acetyl-alpha-D-glucosamine = di-trans,octa-cis-undecaprenyl diphospho-[N-acetyl-alpha-D-glucosaminyl-(1-&gt;4)]-N-acetyl-alpha-D-muramoyl-L-alanyl-D-glutamyl-meso-2,6-diaminopimeloyl-D-alanyl-D-alanine + UDP + H(+). It functions in the pathway cell wall biogenesis; peptidoglycan biosynthesis. In terms of biological role, cell wall formation. Catalyzes the transfer of a GlcNAc subunit on undecaprenyl-pyrophosphoryl-MurNAc-pentapeptide (lipid intermediate I) to form undecaprenyl-pyrophosphoryl-MurNAc-(pentapeptide)GlcNAc (lipid intermediate II). This Idiomarina loihiensis (strain ATCC BAA-735 / DSM 15497 / L2-TR) protein is UDP-N-acetylglucosamine--N-acetylmuramyl-(pentapeptide) pyrophosphoryl-undecaprenol N-acetylglucosamine transferase.